A 122-amino-acid chain; its full sequence is Large ribosomal subunit protein uL14 (122 aa).

The protein belongs to the universal ribosomal protein uL14 family. Part of the 50S ribosomal subunit. Forms a cluster with proteins L3 and L19. In the 70S ribosome, L14 and L19 interact and together make contacts with the 16S rRNA in bridges B5 and B8.

Functionally, binds to 23S rRNA. Forms part of two intersubunit bridges in the 70S ribosome. This chain is Large ribosomal subunit protein uL14, found in Staphylococcus haemolyticus (strain JCSC1435).